Consider the following 624-residue polypeptide: Outer dynein arm-docking complex subunit 4 (624 aa).

8 TPR repeats span residues 11–44 (FPSYMAEGERLYLCGEFTKAIQSFTNALHLQSGD), 46–78 (NCLVARSKCYLKMGDLEKSLNDAEASLRNDPTF), 79–112 (CKGILQKAETLYTMGDFEFALVFYHRGYKLRPDR), 273–309 (LKSLEDIDMLLTSGSADGSLQKAEKVLKKVLEWNQEE), 318–351 (GNLYSCIGNAQIELGQMVAALQSHRKDLEIAKEH), 358–391 (SRALDNIGRVFARVGKFQQAIDTWEEKIPLAKTT), 395–428 (TWLFHEIGRCYLELDQAWQAQSYGEKSQQYAEEE), and 435–468 (LNASVLVAQAQVKLRDFESAVNNFEKALERAKLV). The segment at 511-624 (MSQMDLQGAS…VQKLEKTKEE (114 aa)) is disordered. Basic and acidic residues-rich tracts occupy residues 520–557 (SEKEPLRGREEQERVVKQWERDQESEREATDDEQDRKS), 576–588 (IRRESREIYRRLS), and 595–624 (PSEDGSQKQEKKQAEAAKGEVQKLEKTKEE).

As to quaternary structure, component of the outer dynein arm-docking complex along with ODAD1, ODAD2, and ODAD3. Interacts with ODAD1; this interaction may facilitate the recruitment and/or attachment of outer dynein arm docking complex proteins, including ODAD1, ODAD3 and ODAD2, to ciliary axonemes. Interacts with components of the IFT complex A, including IFT140, TTC21B/IFT139 and WDR19/IFT144, and the IFT complex B, including IFT46, IFT52 and IFT57. Interacts with CFAP53.

It is found in the cell projection. Its subcellular location is the cilium. The protein localises to the cytoplasm. The protein resides in the cytoskeleton. It localises to the cilium axoneme. In terms of biological role, component of the outer dynein arm-docking complex (ODA-DC) that mediates outer dynein arms (ODA) binding onto the doublet microtubule. Plays an essential role for the assembly of ODA-DC and for the docking of ODA in ciliary axoneme. The protein is Outer dynein arm-docking complex subunit 4 (Odad4) of Mus musculus (Mouse).